The sequence spans 431 residues: 5-methylthioadenosine/S-adenosylhomocysteine deaminase (431 aa).

H66 and H68 together coordinate Zn(2+). Residues E95, R147, and H185 each coordinate substrate. Residue H212 participates in Zn(2+) binding. 2 residues coordinate substrate: E215 and D300. D300 provides a ligand contact to Zn(2+).

This sequence belongs to the metallo-dependent hydrolases superfamily. MTA/SAH deaminase family. Zn(2+) is required as a cofactor.

The enzyme catalyses S-adenosyl-L-homocysteine + H2O + H(+) = S-inosyl-L-homocysteine + NH4(+). It catalyses the reaction S-methyl-5'-thioadenosine + H2O + H(+) = S-methyl-5'-thioinosine + NH4(+). In terms of biological role, catalyzes the deamination of 5-methylthioadenosine and S-adenosyl-L-homocysteine into 5-methylthioinosine and S-inosyl-L-homocysteine, respectively. Is also able to deaminate adenosine. The sequence is that of 5-methylthioadenosine/S-adenosylhomocysteine deaminase from Acetivibrio thermocellus (strain ATCC 27405 / DSM 1237 / JCM 9322 / NBRC 103400 / NCIMB 10682 / NRRL B-4536 / VPI 7372) (Clostridium thermocellum).